We begin with the raw amino-acid sequence, 440 residues long: Protein OSB3, chloroplastic/mitochondrial (440 aa).

Residues 1–61 constitute a chloroplast and mitochondrion transit peptide; sequence MNLISRTLTR…AKVSVKPPLN (61 aa). Positions 80–178 constitute an SSB domain; the sequence is ISNWINLIGF…VMVQNLNFVQ (99 aa). PDF region regions lie at residues 218–270, 294–342, and 380–428; these read WKHL…LKLE, WKDL…SKLP, and WKNL…SKLP.

In terms of tissue distribution, expressed primarily in the female gametophyte and in the floral abscission zone.

Its subcellular location is the mitochondrion. It localises to the plastid. It is found in the chloroplast. Functionally, binds single-stranded DNA. This is Protein OSB3, chloroplastic/mitochondrial (OSB3) from Arabidopsis thaliana (Mouse-ear cress).